Reading from the N-terminus, the 479-residue chain is MAQHTVYFPDAFLTQMREAMPSTPSFDDFLAACQRPLRRSIRVNTLKISVADFLRLTAPYGWTLTPIPWCEEGFWIERDNEDALPLGSTAEHLSGLFYIQEASSMLPVAALFADGNAPQRVMDIAAAPGSKTTQIAARMNNEGTILANEFSASRVKVLHANISRCGISNVALTHFDGRVFGAAVPEMFDAILLDAPCSGEGVVRKDPDALKNWSPESNQEIAATQRELIDSAFHALRLGGTLVYSTCTLNREENEAVCLWLKETYPDAVEFLPLGDLFPGTNKALTEEGFLHVFPQIYDCEGFFVARLRKTQAIPALPTPKYKVGNFPFSPVKDREAGQIRQAAASVGLNWDENLRPWQRDKELWLFPVGIEALIGKVRFSRLGIKLAETHNKGYRWQHEAVIALASPDNENAFELTPQEAEEWYRGRDVYPQAAPVADDVLVTFQHQPIGLAKRIGSRLKNSYPRELVRDGKLFTSNA.

S-adenosyl-L-methionine contacts are provided by residues 125–131 (AAAPGSK), Glu149, Asp176, and Asp194. Cys247 acts as the Nucleophile in catalysis.

Belongs to the class I-like SAM-binding methyltransferase superfamily. RsmB/NOP family.

It is found in the cytoplasm. It carries out the reaction cytidine(1407) in 16S rRNA + S-adenosyl-L-methionine = 5-methylcytidine(1407) in 16S rRNA + S-adenosyl-L-homocysteine + H(+). Its function is as follows. Specifically methylates the cytosine at position 1407 (m5C1407) of 16S rRNA. The sequence is that of Ribosomal RNA small subunit methyltransferase F from Shigella dysenteriae serotype 1 (strain Sd197).